Consider the following 555-residue polypeptide: WRKY transcription factor WRKY24 (555 aa).

2 disordered regions span residues 38 to 65 and 132 to 248; these read GGGG…PSSF and QTAP…CTFP. Residues 51–61 show a composition bias toward pro residues; the sequence is PSLPLSPPPVS. The span at 163-194 shows a compositional bias: low complexity; the sequence is QQQQQPWGYQQQPAGMDAGANAASFGAAPFQA. Positions 214–278 form a DNA-binding region, WRKY 1; it reads SQRRSSDDGY…YKGTHNHAKP (65 aa). The Nuclear localization signal signature appears at 253-259; sequence KKKVERS. Residues 270–367 form a disordered region; that stretch reads KGTHNHAKPQ…EGISMAGNRT (98 aa). 2 stretches are compositionally biased toward polar residues: residues 277–294 and 310–320; these read KPQN…QVLQ and TAATPENSSAS. Positions 347–356 are enriched in basic and acidic residues; the sequence is DSKRWRKDGD. A DNA-binding region (WRKY 2) is located at residues 379–444; it reads SDIDILDDGY…YEGKHNHDVP (66 aa). Residues 466 to 555 are transcription repression of gibberellic acid (GA)-induced promoters; the sequence is HPYLPNQPPP…DDMFFQNSLY (90 aa). Disordered regions lie at residues 471–498 and 513–555; these read NQPP…GQGP and GFDD…NSLY.

The protein belongs to the WRKY group II-a family. In terms of tissue distribution, expressed in aleurone cells. Mostly expressed in aleurone layers and leaves, and, to a lower extent, in roots, panicles and embryos.

The protein resides in the nucleus. In terms of biological role, transcription repressor. Interacts specifically with the W box (5'-(T)TGAC[CT]-3'), a frequently occurring elicitor-responsive cis-acting element. Negative regulator of both gibberellic acid (GA) and abscisic acid (ABA) signaling in aleurone cells, probably by interfering with GAM1, via the specific repression of GA- and ABA-induced promoters. This is WRKY transcription factor WRKY24 from Oryza sativa subsp. indica (Rice).